Reading from the N-terminus, the 304-residue chain is tRNA (guanine(9)-N1)-methyltransferase (304 aa).

Composition is skewed to basic and acidic residues over residues 1-26 (MENK…KNET) and 42-72 (RQQE…KRKI). Residues 1–72 (MENKDALDIG…LRKEERKRKI (72 aa)) are disordered. Residues 81 to 276 (QKKRIRLGKV…EVIPKRKGIL (196 aa)) form the SAM-dependent MTase TRM10-type domain. S-adenosyl-L-methionine-binding positions include Leu-183, Gly-203, 207-211 (DKNRY), Cys-215, Leu-229, and 241-243 (KIL). Asp-207 (proton acceptor) is an active-site residue. The disordered stretch occupies residues 282 to 304 (SFDVSEDTRSQSNQSDSELEKEN). At Ser-296 the chain carries Phosphoserine.

Belongs to the class IV-like SAM-binding methyltransferase superfamily. TRM10 family. In terms of assembly, monomer.

It is found in the cytoplasm. The protein localises to the nucleus. It carries out the reaction guanosine(9) in tRNA + S-adenosyl-L-methionine = N(1)-methylguanosine(9) in tRNA + S-adenosyl-L-homocysteine + H(+). Functionally, S-adenosyl-L-methionine-dependent guanine N(1)-methyltransferase that catalyzes the formation of N(1)-methylguanine at position 9 (m1G9) in cytoplasmic tRNA. This chain is tRNA (guanine(9)-N1)-methyltransferase, found in Schizosaccharomyces pombe (strain 972 / ATCC 24843) (Fission yeast).